Consider the following 536-residue polypeptide: SNW domain-containing protein 1 (536 aa).

The interval 1–46 (MALTSFLPAPTQLSQDQLEAEEKARSQRSRQTSLVSSRREPPPYGY) is disordered. A2 carries the N-acetylalanine modification. The residue at position 14 (S14) is a Phosphoserine. K23 is covalently cross-linked (Glycyl lysine isopeptide (Lys-Gly) (interchain with G-Cter in SUMO2)). The segment at 59 to 79 (GDGGAFPEIHVAQYPLDMGRK) is interaction with PPIL1. Residues K81, K97, K115, K122, K141, K158, and K170 each participate in a glycyl lysine isopeptide (Lys-Gly) (interchain with G-Cter in SUMO2) cross-link. The SNW stretch occupies residues 174–339 (AQYIRYTPSQ…KARERRAGIK (166 aa)). Phosphoserine occurs at positions 182 and 190. Residue K193 forms a Glycyl lysine isopeptide (Lys-Gly) (interchain with G-Cter in SUMO2) linkage. A disordered region spans residues 209 to 233 (PPRFKINKKIPRGPPSPPAPVMHSP). A phosphoserine mark is found at S224, S232, and S234. Residues K240, K258, K286, K339, K344, K416, K441, and K452 each participate in a glycyl lysine isopeptide (Lys-Gly) (interchain with G-Cter in SUMO2) cross-link. Residues 311–386 (KMAQKEKEKH…RSKLQRNENR (76 aa)) form a disordered region. Composition is skewed to basic and acidic residues over residues 472–489 (FVPD…RGRE) and 503–530 (KFLE…EHEG). The segment at 472–536 (FVPDKEFSGS…EHEGKKRRKE (65 aa)) is disordered. Residues S479 and S481 each carry the phosphoserine modification. Residue K509 forms a Glycyl lysine isopeptide (Lys-Gly) (interchain with G-Cter in SUMO2) linkage.

Belongs to the SNW family. In terms of assembly, identified in the spliceosome C complex. Associates with U4/U6-U5 tri-small nuclear ribonucleoproteins (U4/U6-U5 tri-snRNPs). Component of the minor spliceosome, which splices U12-type introns. Interacts with SKI, SMAD2,SMAD3, RBPJ, RB1, PABPN1, MAGEA1, SIRT1, FOXN3, U2AF2, PPIL1, DAXX and ATP1B4. Interacts with VDR and RXRA; preferentially associates with VDR:RXRA heterodimers. Interacts with NCOR2. Interacts with MAML1. Interacts with NOTCH1 NICD; the interaction involves multimerized NOTCH1 NICD. Forms a complex with NOTCH1 NICD and MAML1; the association is dissociated by RBPJ. Associates with positive transcription elongation factor b (P-TEFb). Component of the SNARP complex which consists at least of SNIP1, SNW1, THRAP3, BCLAF1 and PNN.

It is found in the nucleus. Its function is as follows. Involved in pre-mRNA splicing as component of the spliceosome. As a component of the minor spliceosome, involved in the splicing of U12-type introns in pre-mRNAs. Required in the specific splicing of CDKN1A pre-mRNA; the function probably involves the recruitment of U2AF2 to the mRNA. May recruit PPIL1 to the spliceosome. May be involved in cyclin-D1/CCND1 mRNA stability through the SNARP complex which associates with both the 3'end of the CCND1 gene and its mRNA. Involved in transcriptional regulation. Modulates TGF-beta-mediated transcription via association with SMAD proteins, MYOD1-mediated transcription via association with PABPN1, RB1-mediated transcriptional repression, and retinoid-X receptor (RXR)- and vitamin D receptor (VDR)-dependent gene transcription in a cell line-specific manner probably involving coactivators NCOA1 and GRIP1. Is involved in NOTCH1-mediated transcriptional activation. Binds to multimerized forms of Notch intracellular domain (NICD) and is proposed to recruit transcriptional coactivators such as MAML1 to form an intermediate preactivation complex which associates with DNA-bound CBF-1/RBPJ to form a transcriptional activation complex by releasing SNW1 and redundant NOTCH1 NICD. The chain is SNW domain-containing protein 1 (SNW1) from Bos taurus (Bovine).